Reading from the N-terminus, the 520-residue chain is Putative tyrosine carboxypeptidase MATCAP2 (520 aa).

Residues 116 to 153 (EEKKYHSQKQSSSTYSKRCRKPSKSPNTSRSKDPRRMK) form a disordered region. Residue His-331 coordinates Zn(2+). Glu-332 functions as the Nucleophile in the catalytic mechanism. Residues His-336 and Glu-367 each coordinate Zn(2+).

Requires Zn(2+) as cofactor.

Putative tyrosine carboxypeptidase. In Homo sapiens (Human), this protein is Putative tyrosine carboxypeptidase MATCAP2.